The chain runs to 69 residues: Conotoxin AbVIE (69 aa).

An N-terminal signal peptide occupies residues 1–17 (VLIIAVLFLTACQLTTA). A propeptide spanning residues 18 to 40 (ETSSRGKQKHRALRSTDKYSRMT) is cleaved from the precursor. 3 cysteine pairs are disulfide-bonded: Cys-43–Cys-57, Cys-50–Cys-61, and Cys-56–Cys-66.

Belongs to the conotoxin O1 superfamily. Expressed by the venom duct.

It localises to the secreted. In Conus abbreviatus (Abbreviated cone), this protein is Conotoxin AbVIE.